The primary structure comprises 324 residues: R2-like ligand binding oxidase (324 aa).

Residues Glu-79, Glu-112, and His-115 each contribute to the Mn(2+) site. A cross-link (3-(O4'-tyrosyl)-valine (Val-Tyr)) is located at residues 82-173; the sequence is VTEDIQPFMK…VNQVRASVTY (92 aa). Glu-112 is a Fe cation binding site. Residues Glu-178, Glu-213, and His-216 each contribute to the Fe cation site. Residues 304 to 324 form a disordered region; that stretch reads PEALEEKFGEEDAKAMSEAAG. A compositionally biased stretch (basic and acidic residues) spans 307–318; the sequence is LEEKFGEEDAKA.

The protein belongs to the ribonucleoside diphosphate reductase small chain family. R2-like ligand binding oxidase subfamily. In terms of assembly, homodimer. Requires Fe cation as cofactor. It depends on Mn(2+) as a cofactor.

In terms of biological role, probable oxidase. The chain is R2-like ligand binding oxidase from Rhodococcus jostii (strain RHA1).